The primary structure comprises 210 residues: Glutathione S-transferase P (210 aa).

The 80-residue stretch at A2 to G81 folds into the GST N-terminal domain. The residue at position 4 (Y4) is a Phosphotyrosine; by EGFR. Glutathione contacts are provided by residues Y8, R14, W39, K45, and Q52–L53. Position 62 is a phosphothreonine (T62). Q65–S66 lines the glutathione pocket. The region spanning D83–I204 is the GST C-terminal domain. 2 positions are modified to N6-succinyllysine: K103 and K116. K128 carries the post-translational modification N6-acetyllysine.

It belongs to the GST superfamily. Pi family. Homodimer. Interacts with CDK5.

The protein resides in the cytoplasm. It localises to the mitochondrion. It is found in the nucleus. It catalyses the reaction RX + glutathione = an S-substituted glutathione + a halide anion + H(+). The catalysed reaction is prostaglandin J2 + glutathione = prostaglandin J2-S-(R)-glutathione. It carries out the reaction prostaglandin J2 + glutathione = prostaglandin J2-S-(S)-glutathione. The enzyme catalyses prostaglandin A2 + glutathione = prostaglandin A2-S-(S)-glutathione. It catalyses the reaction 11(S)-hydroxy-14(S),15(S)-epoxy-(5Z,8Z,12E)-eicosatrienoate + glutathione = (11S,15S)-dihydroxy-14(R)-S-glutathionyl-(5Z,8Z,12E)-eicosatrienoate. Conjugation of reduced glutathione to a wide number of exogenous and endogenous hydrophobic electrophiles. Involved in the formation of glutathione conjugates of both prostaglandin A2 (PGA2) and prostaglandin J2 (PGJ2). Participates in the formation of novel hepoxilin regioisomers. Negatively regulates CDK5 activity via p25/p35 translocation to prevent neurodegeneration. The sequence is that of Glutathione S-transferase P (GSTP1) from Capra hircus (Goat).